The sequence spans 375 residues: CCN family member 1 (375 aa).

Positions 1–22 (MGSAGARPALAAALLCLARLAL) are cleaved as a signal peptide. Residues 23-94 (GSPCPAVCQC…AATNGICRAQ (72 aa)) form the IGFBP N-terminal domain. Disulfide bonds link Cys26-Cys50, Cys30-Cys52, Cys32-Cys53, Cys39-Cys56, Cys64-Cys78, and Cys70-Cys91. A VWFC domain is found at 98–164 (RPCEYNSKIY…GQCCEEWVCD (67 aa)). Positions 223–268 (KCIVQTTSWSQCSKTCGTGISTRVTNDNPDCKLIKETRICEVRPCG) constitute a TSP type-1 domain. The segment at 274–310 (SLKKGKKCTKTKKSPSPVRFTYAGCSSVKKYRPKYCG) is heparin-binding. 5 disulfides stabilise this stretch: Cys281–Cys318, Cys298–Cys332, Cys309–Cys348, Cys312–Cys350, and Cys317–Cys354. The region spanning 281 to 355 (CTKTKKSPSP…QSCRCNYNCP (75 aa)) is the CTCK domain.

Belongs to the CCN family.

Its subcellular location is the secreted. In terms of biological role, probable secreted regulatory protein. The polypeptide is CCN family member 1 (CCN1) (Gallus gallus (Chicken)).